The chain runs to 488 residues: Glutamate synthase [NADPH] small chain (488 aa).

The region spanning 38–69 (ESLRQQATRCMDCGIPFCHNGCPLGNLIPEWN) is the 4Fe-4S ferredoxin-type domain.

[4Fe-4S] cluster is required as a cofactor.

It carries out the reaction 2 L-glutamate + NADP(+) = L-glutamine + 2-oxoglutarate + NADPH + H(+). Its pathway is amino-acid biosynthesis; L-glutamate biosynthesis via GLT pathway; L-glutamate from 2-oxoglutarate and L-glutamine (NADP(+) route): step 1/1. The sequence is that of Glutamate synthase [NADPH] small chain (gltD) from Mycobacterium tuberculosis (strain CDC 1551 / Oshkosh).